Consider the following 614-residue polypeptide: Male-specific lethal 1 homolog (614 aa).

Disordered regions lie at residues 1 to 127 (MTMR…GCSP) and 147 to 217 (KEPT…GASS). Phosphoserine occurs at positions 66 and 126. Low complexity predominate over residues 158 to 169 (GAASPAATASDP). Over residues 170–184 (AGPPPLPLPGPPPLA) the composition is skewed to pro residues. Residues 185 to 194 (PTATAGTLAA) show a composition bias toward low complexity. At Ser-205 the chain carries Phosphoserine. Residues 213–282 (SGASSQAACL…KDNEKERHKL (70 aa)) are a coiled coil. Positions 223–237 (KQILLLQLDLIEQQQ) are interaction with MSL2. Basic and acidic residues-rich tracts occupy residues 272–281 (KKDNEKERHK) and 294–304 (TELSEKIKLEC). The tract at residues 272 to 420 (KKDNEKERHK…PKEKAFSSEI (149 aa)) is disordered. Lys-301 participates in a covalent cross-link: Glycyl lysine isopeptide (Lys-Gly) (interchain with G-Cter in SUMO2). The Nuclear localization signal motif lies at 317–346 (PKPFSCGRSGKGHKRKSPFGSTERKTPVKK). Lys-353 carries the N6-acetyllysine modification. Residues Lys-365 and Lys-378 each participate in a glycyl lysine isopeptide (Lys-Gly) (interchain with G-Cter in SUMO2) cross-link. Positions 376-392 (VCKRELRSQETPEKPRS) are enriched in basic and acidic residues. The residue at position 393 (Ser-393) is a Phosphoserine. Positions 393-407 (SVDTPPRLSTPQKGP) are enriched in polar residues. Position 396 is a phosphothreonine (Thr-396). Ser-442 bears the Phosphoserine mark. A PEHE domain is found at 472–591 (VLAVPSWRDH…LTPQNFELPW (120 aa)). The interval 496-514 (ENLDDSVFSKRHAKLELDE) is interaction with KAT8 HAT domain. A Bipartite nuclear localization signal motif is present at residues 505–519 (KRHAKLELDEKRRKR). Residues 550-591 (EVTSFFPEPDDVESLMITPFLPVVAFGRPLPKLTPQNFELPW) form a sufficient for interaction with MSL3 MRG domain region.

Belongs to the msl-1 family. In terms of assembly, component of a multisubunit histone acetyltransferase complex (MSL) at least composed of the KAT8/MOF/MYST1, MSL1/hampin, MSL2 and MSL3. Forms a MSL heterotetrameric core with MSL2. Interacts (via PEHE domain) with KAT8 (via HAT domain) and MSL3 (via MRG domain); both interactions are direct. Directly interacts with NUPR1. Interacts with TP53BP1; this interaction may be required for MSL1 DNA repair activity, but not for histone acetyltransferase activity. Interacts with TTC4, ECM2 and PIHD1. In terms of processing, sumoylated with SUMO1.

The protein resides in the nucleus. Its subcellular location is the nucleoplasm. It localises to the nucleus speckle. Non-catalytic component of the MSL histone acetyltransferase complex, a multiprotein complex that mediates the majority of histone H4 acetylation at 'Lys-16' (H4K16ac), an epigenetic mark that prevents chromatin compaction. The MSL complex is required for chromosome stability and genome integrity by maintaining homeostatic levels of H4K16ac. The MSL complex is also involved in gene dosage by promoting up-regulation of genes expressed by the X chromosome. X up-regulation is required to compensate for autosomal biallelic expression. The MSL complex also participates in gene dosage compensation by promoting expression of Tsix non-coding RNA. Within the MSL complex, acts as a scaffold to tether MSL3 and KAT8 together for enzymatic activity regulation. Greatly enhances MSL2 E3 ubiquitin ligase activity, promoting monoubiquitination of histone H2B at 'Lys-34' (H2BK34Ub). This modification in turn stimulates histone H3 methylation at 'Lys-4' (H3K4me) and 'Lys-79' (H3K79me) and leads to gene activation, including that of HOXA9 and MEIS1. This is Male-specific lethal 1 homolog from Homo sapiens (Human).